The chain runs to 392 residues: Stilbene synthase 5 (392 aa).

55–58 (KFNR) contributes to the substrate binding site. Residue Cys-164 is part of the active site. Residues Leu-267 and 305 to 307 (GGP) each bind substrate.

This sequence belongs to the thiolase-like superfamily. Chalcone/stilbene synthases family. As to quaternary structure, homodimer.

Its subcellular location is the cytoplasm. It carries out the reaction 4-coumaroyl-CoA + 3 malonyl-CoA + 3 H(+) = trans-resveratrol + 4 CO2 + 4 CoA. It functions in the pathway phytoalexin biosynthesis; 3,4',5-trihydroxystilbene biosynthesis; 3,4',5-trihydroxystilbene from trans-4-coumarate: step 2/2. In terms of biological role, mediates resistance to pathogens which are sensitive to stilbenes. This Vitis vinifera (Grape) protein is Stilbene synthase 5.